Reading from the N-terminus, the 250-residue chain is Triosephosphate isomerase (250 aa).

9-11 (NWK) is a binding site for substrate. Catalysis depends on His94, which acts as the Electrophile. Glu166 acts as the Proton acceptor in catalysis. Substrate is bound by residues Gly172, Ser212, and 233–234 (GG).

The protein belongs to the triosephosphate isomerase family. As to quaternary structure, homodimer.

The protein localises to the cytoplasm. It catalyses the reaction D-glyceraldehyde 3-phosphate = dihydroxyacetone phosphate. It participates in carbohydrate biosynthesis; gluconeogenesis. The protein operates within carbohydrate degradation; glycolysis; D-glyceraldehyde 3-phosphate from glycerone phosphate: step 1/1. Functionally, involved in the gluconeogenesis. Catalyzes stereospecifically the conversion of dihydroxyacetone phosphate (DHAP) to D-glyceraldehyde-3-phosphate (G3P). The protein is Triosephosphate isomerase of Clostridium novyi (strain NT).